The chain runs to 137 residues: Large ribosomal subunit protein uL16 (137 aa).

The protein belongs to the universal ribosomal protein uL16 family. Part of the 50S ribosomal subunit.

Its function is as follows. Binds 23S rRNA and is also seen to make contacts with the A and possibly P site tRNAs. The sequence is that of Large ribosomal subunit protein uL16 from Streptococcus pneumoniae serotype 2 (strain D39 / NCTC 7466).